The primary structure comprises 139 residues: Lamprin 0.9 (139 aa).

Residues 1–19 (MAAAIQALLVLALLHLATA) form the signal peptide. 8 tandem repeats follow at residues 42–46 (GGLGY), 47–51 (GGLGY), 52–56 (GGLGV), 57–61 (AGLGV), 62–66 (AGLGY), 67–71 (GGLGY), 92–96 (GGLGY), and 106–110 (GGLGY). Positions 42–110 (GGLGYGGLGY…YHHALGGLGY (69 aa)) are 8 X 5 AA approximate repeats.

The polymeric lamprin chains self-aggregate to form fibers and have secondary structures particularly rich in beta-sheets and in beta-turns.

It is found in the secreted. Its subcellular location is the extracellular space. The protein localises to the extracellular matrix. In terms of biological role, self-aggregating protein that is part of the soluble form of lamprin. The chain is Lamprin 0.9 from Petromyzon marinus (Sea lamprey).